Reading from the N-terminus, the 215-residue chain is Pyridoxine/pyridoxamine 5'-phosphate oxidase (215 aa).

Substrate-binding positions include 11 to 14 (RRDY) and Lys69. Residues 64-69 (RVVLLK), 79-80 (YT), Lys86, and Gln108 each bind FMN. Residues Tyr126, Arg130, and Ser134 each coordinate substrate. FMN-binding positions include 143–144 (QS) and Trp188. A substrate-binding site is contributed by 194–196 (RLH). Arg198 serves as a coordination point for FMN.

The protein belongs to the pyridoxamine 5'-phosphate oxidase family. In terms of assembly, homodimer. The cofactor is FMN.

The catalysed reaction is pyridoxamine 5'-phosphate + O2 + H2O = pyridoxal 5'-phosphate + H2O2 + NH4(+). It carries out the reaction pyridoxine 5'-phosphate + O2 = pyridoxal 5'-phosphate + H2O2. The protein operates within cofactor metabolism; pyridoxal 5'-phosphate salvage; pyridoxal 5'-phosphate from pyridoxamine 5'-phosphate: step 1/1. It functions in the pathway cofactor metabolism; pyridoxal 5'-phosphate salvage; pyridoxal 5'-phosphate from pyridoxine 5'-phosphate: step 1/1. Functionally, catalyzes the oxidation of either pyridoxine 5'-phosphate (PNP) or pyridoxamine 5'-phosphate (PMP) into pyridoxal 5'-phosphate (PLP). This chain is Pyridoxine/pyridoxamine 5'-phosphate oxidase, found in Legionella pneumophila (strain Paris).